A 509-amino-acid chain; its full sequence is Coiled-coil domain-containing protein 181 (509 aa).

Positions 46–82 (ENINQDLKENETVMEHTKRHSDPDKSLQDEVSPRRND) are enriched in basic and acidic residues. Disordered stretches follow at residues 46–120 (ENIN…EEED) and 241–367 (PINN…EEKE). Composition is skewed to polar residues over residues 243 to 266 (NNANSTENDPQQLLPRSSNSSVSG) and 300 to 334 (TCPSSAVNSDRSKGNGKSNHRTQSAHISPVTSTYC). The stretch at 335–375 (LSPRQKELQKQLEEKREKLKREEERRKIEEEKEKKRENDIV) forms a coiled coil. Residues 338-367 (RQKELQKQLEEKREKLKREEERRKIEEEKE) show a composition bias toward basic and acidic residues.

It belongs to the CCDC181 family. Homodimer. Interacts with HOOK1. Interacts with HOOK2. Interacts with HOOK3.

The protein resides in the cytoplasm. Its subcellular location is the cytoskeleton. The protein localises to the cell projection. It localises to the cilium. It is found in the flagellum. Functionally, microtubule-binding protein that localizes to the microtubular manchette of elongating spermatids. This chain is Coiled-coil domain-containing protein 181, found in Homo sapiens (Human).